Here is a 441-residue protein sequence, read N- to C-terminus: MSNVTHQPKIGFVSLGCPKNLVDSERILTELRTEGYDVVPTYDNADMVIVNTCGFIDSAVQESLEAIGEALKENGKVIVTGCLGAKEDQIREVHPKVLEITGPHSYEQVLEHVHHYTPKPKHNPFLSLVPEQGVKLTPRHYAYLKISEGCNHRCTFCIIPSMRGDLVSRPIGEVLAEAKRLADAGVKELLVISQDTSAYGVDVKHRTGFHNGMPVKTSMVSLCEELAKLGIWVRLHYVYPYPHVDDVIPLMAEGKILPYLDIPLQHASPRILKLMKRPGSADRQLARIKQWREICPDLTLRSTFIVGFPGETEEDFQMLLDFLKEARLDRVGCFKYSPVEGATANELADQVPEEVKEERWNRFMQLQQQISAERLQEKVGREILVLVDEVDEEGAIGRSMADAPEIDGAVYLNGETRVKPGDVVRVKVEHADEYDLWGTRV.

An MTTase N-terminal domain is found at 8 to 118; it reads PKIGFVSLGC…VLEHVHHYTP (111 aa). [4Fe-4S] cluster is bound by residues cysteine 17, cysteine 53, cysteine 82, cysteine 150, cysteine 154, and cysteine 157. Residues 136–373 form the Radical SAM core domain; sequence LTPRHYAYLK…MQLQQQISAE (238 aa). The TRAM domain occupies 376 to 441; that stretch reads QEKVGREILV…DEYDLWGTRV (66 aa).

The protein belongs to the methylthiotransferase family. RimO subfamily. [4Fe-4S] cluster serves as cofactor.

It is found in the cytoplasm. The enzyme catalyses L-aspartate(89)-[ribosomal protein uS12]-hydrogen + (sulfur carrier)-SH + AH2 + 2 S-adenosyl-L-methionine = 3-methylsulfanyl-L-aspartate(89)-[ribosomal protein uS12]-hydrogen + (sulfur carrier)-H + 5'-deoxyadenosine + L-methionine + A + S-adenosyl-L-homocysteine + 2 H(+). Functionally, catalyzes the methylthiolation of an aspartic acid residue of ribosomal protein uS12. The sequence is that of Ribosomal protein uS12 methylthiotransferase RimO from Klebsiella pneumoniae subsp. pneumoniae (strain ATCC 700721 / MGH 78578).